The chain runs to 282 residues: Non-selective voltage-gated ion channel VDAC2 (282 aa).

Ala-1 bears the N-acetylalanine mark. 19 beta stranded membrane-spanning segments follow: residues 25-34 (LVKLDVKTKS), 38-46 (VEFTTSGTS), 53-63 (VNGSLETKYKW), 68-75 (LTFTEKWN), 79-88 (TLGTEIAIED), 94-103 (LKLTFDTTFS), 110-119 (SGKVKAAYKQ), 122-129 (VNLGCDVD), 136-144 (AIHGSAVVG), 149-157 (LAGYQMTFD), 162-174 (KLTK…GYKT), 177-184 (FQLHTNVN), 188-197 (EFAGSIYQKV), 201-210 (METAVNLAWT), 217-226 (RFGIAAKYQL), 230-237 (AAISAKVN), 241-250 (LVGVGYTQTL), 253-262 (GVKLTLSALV), and 272-281 (HKLGLGLELE). NAD(+) is bound by residues 241-243 (LVG) and 259-263 (SALVD).

This sequence belongs to the eukaryotic mitochondrial porin family. As to quaternary structure, monomer, homodimer and higher order oligomers; formation of higher order structures is necessary for scramblase activity. In terms of tissue distribution, expressed in skeletal muscle and oocytes.

It localises to the mitochondrion outer membrane. The protein localises to the membrane. The enzyme catalyses chloride(in) = chloride(out). The catalysed reaction is K(+)(in) = K(+)(out). It carries out the reaction a 1,2-diacyl-sn-glycero-3-phospho-L-serine(in) = a 1,2-diacyl-sn-glycero-3-phospho-L-serine(out). It catalyses the reaction a 1,2-diacyl-sn-glycero-3-phosphocholine(in) = a 1,2-diacyl-sn-glycero-3-phosphocholine(out). The enzyme catalyses a 1,2-diacyl-sn-glycero-3-phospho-(1D-myo-inositol)(in) = a 1,2-diacyl-sn-glycero-3-phospho-(1D-myo-inositol)(out). Functionally, non-selective voltage-gated ion channel that mediates the transport of anions and cations through the mitochondrion outer membrane and plasma membrane. The channel adopts an open conformation at zero mV and a closed conformation at both positive and negative potentials. There are two populations of channels; the main that functions in a lower open-state conductance with lower ion selectivity, that switch, in a voltage-dependent manner, from the open to a low-conducting 'closed' state and the other that has a normal ion selectivity in the typical high conductance, 'open' state. Its function is as follows. Catalyzes the scrambling of phospholipids across the outer mitochondrial membrane; the mechanism is unrelated to channel activity and is capable of translocating both anionic and zwitterionic phospholipids. This is Non-selective voltage-gated ion channel VDAC2 from Xenopus laevis (African clawed frog).